Reading from the N-terminus, the 164-residue chain is Phospholipase A and acyltransferase 4 (164 aa).

The tract at residues 1–40 (MASPHQEPKPGDLIEIFRLGYEHWALYIGDGYVIHLAPPS) is essential for its ability regulate keratinocyte differentiation. Over 1–134 (MASPHQEPKP…SRCKQVEKAK (134 aa)) the chain is Cytoplasmic. An LRAT domain is found at 13–129 (LIEIFRLGYE…LRYGKSRCKQ (117 aa)). Active-site residues include H23 and H35. C113 serves as the catalytic Acyl-thioester intermediate. Positions 124-164 (KSRCKQVEKAKVEVGVATALGILVVAGCSFAIRRYQKKATA) are interaction with TGM1. A helical transmembrane segment spans residues 135–155 (VEVGVATALGILVVAGCSFAI). Residues 156–164 (RRYQKKATA) are Lumenal-facing.

This sequence belongs to the H-rev107 family. Interacts with TGM1. As to expression, widely expressed.

It is found in the membrane. The catalysed reaction is a 1,2-diacyl-sn-glycero-3-phosphocholine + H2O = a 1-acyl-sn-glycero-3-phosphocholine + a fatty acid + H(+). It catalyses the reaction a 1,2-diacyl-sn-glycero-3-phosphocholine + H2O = a 2-acyl-sn-glycero-3-phosphocholine + a fatty acid + H(+). The enzyme catalyses 1,2-dihexadecanoyl-sn-glycero-3-phosphocholine + H2O = 1-hexadecanoyl-sn-glycero-3-phosphocholine + hexadecanoate + H(+). It carries out the reaction 1,2-dihexadecanoyl-sn-glycero-3-phosphocholine + H2O = 2-hexadecanoyl-sn-glycero-3-phosphocholine + hexadecanoate + H(+). The catalysed reaction is 1-hexadecanoyl-2-(9Z-octadecenoyl)-sn-glycero-3-phosphocholine + H2O = 2-(9Z-octadecenoyl)-sn-glycero-3-phosphocholine + hexadecanoate + H(+). It catalyses the reaction 1-hexadecanoyl-2-(9Z-octadecenoyl)-sn-glycero-3-phosphocholine + H2O = 1-hexadecanoyl-sn-glycero-3-phosphocholine + (9Z)-octadecenoate + H(+). The enzyme catalyses 1-hexadecanoyl-2-(5Z,8Z,11Z,14Z-eicosatetraenoyl)-sn-glycero-3-phosphocholine + H2O = 2-(5Z,8Z,11Z,14Z)-eicosatetraenoyl-sn-glycero-3-phosphocholine + hexadecanoate + H(+). It carries out the reaction 1-hexadecanoyl-2-(9Z,12Z-octadecadienoyl)-sn-glycero-3-phosphoethanolamine + H2O = 1-hexadecanoyl-sn-glycero-3-phosphoethanolamine + (9Z,12Z)-octadecadienoate + H(+). The catalysed reaction is 1-hexadecanoyl-2-(9Z,12Z-octadecadienoyl)-sn-glycero-3-phosphoethanolamine + H2O = 2-(9Z,12Z)-octadecadienoyl-sn-glycero-3-phosphoethanolamine + hexadecanoate + H(+). It catalyses the reaction 1-hexadecanoyl-2-(5Z,8Z,11Z,14Z-eicosatetraenoyl)-sn-glycero-3-phosphoethanolamine + H2O = 2-(5Z,8Z,11Z,14Z)-eicosatetraenoyl-sn-glycero-3-phosphoethanolamine + hexadecanoate + H(+). The enzyme catalyses 1-hexanoyl-2-acyl-sn-glycero-3-phosphocholine + H2O = hexanoate + a 2-acyl-sn-glycero-3-phosphocholine + H(+). It carries out the reaction 1,2-diheptadecanoyl-sn-glycero-3-phosphoethanolamine + 1-(9Z-octadecenoyl)-2-hexadecanoyl-sn-glycero-3-phosphocholine = 1,2-diheptadecanoyl-sn-glycero-3-phospho-N-hexadecanoyl-ethanolamine + 1-(9Z-octadecenoyl)-sn-glycero-3-phosphocholine + H(+). The catalysed reaction is 1,2-diheptadecanoyl-sn-glycero-3-phosphoethanolamine + 1-(9Z-octadecenoyl)-2-hexadecanoyl-sn-glycero-3-phosphocholine = 1,2-diheptadecanoyl-sn-glycero-3-phospho-N-(9Z-octadecenoyl)-ethanolamine + 2-hexadecanoyl-sn-glycero-3-phosphocholine + H(+). Functionally, exhibits both phospholipase A1/2 and acyltransferase activities. Shows phospholipase A1 (PLA1) and A2 (PLA2), catalyzing the calcium-independent release of fatty acids from the sn-1 or sn-2 position of glycerophospholipids. For most substrates, PLA1 activity is much higher than PLA2 activity. Shows O-acyltransferase activity, catalyzing the transfer of a fatty acyl group from glycerophospholipid to the hydroxyl group of lysophospholipid. Shows N-acyltransferase activity, catalyzing the calcium-independent transfer of a fatty acyl group at the sn-1 position of phosphatidylcholine (PC) and other glycerophospholipids to the primary amine of phosphatidylethanolamine (PE), forming N-acylphosphatidylethanolamine (NAPE), which serves as precursor for N-acylethanolamines (NAEs). Promotes keratinocyte differentiation via activation of TGM1. This chain is Phospholipase A and acyltransferase 4, found in Homo sapiens (Human).